A 274-amino-acid chain; its full sequence is NH(3)-dependent NAD(+) synthetase (274 aa).

Residue 46–53 (GISGGQDS) coordinates ATP. Asp-52 is a Mg(2+) binding site. Arg-140 is a binding site for deamido-NAD(+). Thr-160 contacts ATP. Glu-165 is a Mg(2+) binding site. Deamido-NAD(+)-binding residues include Lys-173 and Asp-180. Positions 189 and 211 each coordinate ATP. 260–261 (HK) provides a ligand contact to deamido-NAD(+).

It belongs to the NAD synthetase family. Homodimer.

The catalysed reaction is deamido-NAD(+) + NH4(+) + ATP = AMP + diphosphate + NAD(+) + H(+). It participates in cofactor biosynthesis; NAD(+) biosynthesis; NAD(+) from deamido-NAD(+) (ammonia route): step 1/1. Its function is as follows. Catalyzes the ATP-dependent amidation of deamido-NAD to form NAD. Uses ammonia as a nitrogen source. In Nocardia farcinica (strain IFM 10152), this protein is NH(3)-dependent NAD(+) synthetase.